Consider the following 558-residue polypeptide: Mitochondrial nucleoid-associated protein 1 (558 aa).

The Extracellular segment spans residues 1–527 (MGAAEPRMEV…VQCNTTIKKS (527 aa)). 3 disordered regions span residues 29–88 (KMRG…SWTA), 130–205 (LQRV…KLGT), and 222–269 (LSDR…KTQK). Positions 36-45 (SADQNVSQSK) are enriched in polar residues. Positions 51–81 (QKEKSPTRDLTRAKEKELEVDRPKRAVKAET) are enriched in basic and acidic residues. Polar residues-rich tracts occupy residues 131-144 (QRVT…SDAT) and 187-197 (SSTQPHANPAT). A helical transmembrane segment spans residues 528–548 (GVGGLTMLFAGYFILCCNWSF). Residues 549-558 (KHLKLQHWRK) lie on the Cytoplasmic side of the membrane.

Its subcellular location is the mitochondrion inner membrane. The protein resides in the mitochondrion matrix. It is found in the mitochondrion nucleoid. Its function is as follows. Critical regulator of mitochondrial DNA (mtDNA) abundance. Binds dsDNA throughout the mitochondrial genome without sequence specificity and controls mtDNA copy number by promoting its replication. Also plays important roles in mitochondrial metabolism and cell proliferation. The protein is Mitochondrial nucleoid-associated protein 1 of Mus musculus (Mouse).